Consider the following 751-residue polypeptide: Catalase-peroxidase (751 aa).

The disordered stretch occupies residues 1 to 21 (MSNESKCPFHQTAGGGTTNRD). Residues 90–244 (WHSAGTYRIG…LAAVQMGLIY (155 aa)) constitute a cross-link (tryptophyl-tyrosyl-methioninium (Trp-Tyr) (with M-270)). Catalysis depends on H91, which acts as the Proton acceptor. A cross-link (tryptophyl-tyrosyl-methioninium (Tyr-Met) (with W-90)) is located at residues 244-270 (YVNPEGPEGNPDPVASGKDIRETFGRM). Residue H285 coordinates heme b. Residues 365–390 (AHQWRPKEGKGAGTVPDAHDPGKKHA) are disordered.

Belongs to the peroxidase family. Peroxidase/catalase subfamily. In terms of assembly, homodimer or homotetramer. The cofactor is heme b. Post-translationally, formation of the three residue Trp-Tyr-Met cross-link is important for the catalase, but not the peroxidase activity of the enzyme.

The enzyme catalyses H2O2 + AH2 = A + 2 H2O. It catalyses the reaction 2 H2O2 = O2 + 2 H2O. Bifunctional enzyme with both catalase and broad-spectrum peroxidase activity. The polypeptide is Catalase-peroxidase (Pseudomonas putida (strain GB-1)).